We begin with the raw amino-acid sequence, 89 residues long: Large ribosomal subunit protein bL27 (89 aa).

Positions 1–26 (MAQKKAGGSSRNGRDSVGQRRGVKRF) are disordered.

The protein belongs to the bacterial ribosomal protein bL27 family.

The protein is Large ribosomal subunit protein bL27 of Desulfovibrio desulfuricans (strain ATCC 27774 / DSM 6949 / MB).